We begin with the raw amino-acid sequence, 352 residues long: Keratocan (352 aa).

The N-terminal stretch at 1 to 20 is a signal peptide; sequence MASTICFILWVVFVTDTVWT. The 39-residue stretch at 33–71 folds into the LRRNT domain; sequence EDWTMHDFDCPRECFCPPSFPTALYCENRGLKEIPAIPS. Intrachain disulfides connect Cys42/Cys48 and Cys46/Cys58. LRR repeat units follow at residues 72–93, 96–117, 122–142, 143–164, 167–180, 193–214, 215–235, and 238–258; these read RIWY…PFEN, QLRW…KGAL, KLLF…PLPR, SLEQ…TFSN, NLTL…KLLD, NLMQ…LPAN, TMQV…YFNV, and KVAF…PSSG. A glycan (N-linked (GlcNAc...) (keratan sulfate) asparagine) is linked at Asn93. The N-linked (GlcNAc...) (keratan sulfate) asparagine glycan is linked to Asn167. The N-linked (GlcNAc...) asparagine glycan is linked to Asn222. Residue Asn260 is glycosylated (N-linked (GlcNAc...) (keratan sulfate) asparagine). LRR repeat units lie at residues 263-282 and 283-304; these read SILD…KISA and HLQH…VICP. N-linked (GlcNAc...) asparagine glycosylation occurs at Asn298. A disulfide bond links Cys303 and Cys343.

The protein belongs to the small leucine-rich proteoglycan (SLRP) family. SLRP class II subfamily. Binds three long, highly sulfated keratan sulfate chains in the cornea but short, non-sulfated poly(N-acetyllactosamine) chains in other tissues. Post-translationally, the N-terminus is blocked. In terms of tissue distribution, abundant in cornea and sclera but also found in other tissues.

The protein resides in the secreted. It is found in the extracellular space. The protein localises to the extracellular matrix. In terms of biological role, may be important in developing and maintaining corneal transparency and for the structure of the stromal matrix. In Bos taurus (Bovine), this protein is Keratocan (KERA).